The following is a 186-amino-acid chain: Ribosome-recycling factor (186 aa).

This sequence belongs to the RRF family.

It is found in the cytoplasm. In terms of biological role, responsible for the release of ribosomes from messenger RNA at the termination of protein biosynthesis. May increase the efficiency of translation by recycling ribosomes from one round of translation to another. This Leifsonia xyli subsp. xyli (strain CTCB07) protein is Ribosome-recycling factor.